The following is a 575-amino-acid chain: Isocitrate dehydrogenase kinase/phosphatase (575 aa).

ATP contacts are provided by residues 315 to 321 (APGVKGM) and lysine 336. Aspartate 371 is an active-site residue.

The protein belongs to the AceK family.

Its subcellular location is the cytoplasm. The enzyme catalyses L-seryl-[isocitrate dehydrogenase] + ATP = O-phospho-L-seryl-[isocitrate dehydrogenase] + ADP + H(+). In terms of biological role, bifunctional enzyme which can phosphorylate or dephosphorylate isocitrate dehydrogenase (IDH) on a specific serine residue. This is a regulatory mechanism which enables bacteria to bypass the Krebs cycle via the glyoxylate shunt in response to the source of carbon. When bacteria are grown on glucose, IDH is fully active and unphosphorylated, but when grown on acetate or ethanol, the activity of IDH declines drastically concomitant with its phosphorylation. The protein is Isocitrate dehydrogenase kinase/phosphatase of Yersinia enterocolitica serotype O:8 / biotype 1B (strain NCTC 13174 / 8081).